The primary structure comprises 218 residues: Octanoyltransferase (218 aa).

A BPL/LPL catalytic domain is found at 32–211 (INTYDEIWFL…KLSQLLNVSI (180 aa)). Substrate contacts are provided by residues 75–82 (RGGQITYH), 142–144 (SLG), and 155–157 (GLS). The active-site Acyl-thioester intermediate is the cysteine 173.

Belongs to the LipB family.

The protein localises to the cytoplasm. It carries out the reaction octanoyl-[ACP] + L-lysyl-[protein] = N(6)-octanoyl-L-lysyl-[protein] + holo-[ACP] + H(+). The protein operates within protein modification; protein lipoylation via endogenous pathway; protein N(6)-(lipoyl)lysine from octanoyl-[acyl-carrier-protein]: step 1/2. Catalyzes the transfer of endogenously produced octanoic acid from octanoyl-acyl-carrier-protein onto the lipoyl domains of lipoate-dependent enzymes. Lipoyl-ACP can also act as a substrate although octanoyl-ACP is likely to be the physiological substrate. The polypeptide is Octanoyltransferase (Buchnera aphidicola subsp. Schizaphis graminum (strain Sg)).